The primary structure comprises 240 residues: 4-hydroxy-tetrahydrodipicolinate reductase (240 aa).

NAD(+) is bound by residues 79 to 81 and 103 to 106; these read ATT and SANM. The active-site Proton donor/acceptor is the H135. Residue H136 coordinates (S)-2,3,4,5-tetrahydrodipicolinate. K139 acts as the Proton donor in catalysis. A (S)-2,3,4,5-tetrahydrodipicolinate-binding site is contributed by 145–146; that stretch reads GT.

This sequence belongs to the DapB family.

The protein resides in the cytoplasm. It catalyses the reaction (S)-2,3,4,5-tetrahydrodipicolinate + NAD(+) + H2O = (2S,4S)-4-hydroxy-2,3,4,5-tetrahydrodipicolinate + NADH + H(+). The catalysed reaction is (S)-2,3,4,5-tetrahydrodipicolinate + NADP(+) + H2O = (2S,4S)-4-hydroxy-2,3,4,5-tetrahydrodipicolinate + NADPH + H(+). It functions in the pathway amino-acid biosynthesis; L-lysine biosynthesis via DAP pathway; (S)-tetrahydrodipicolinate from L-aspartate: step 4/4. Functionally, catalyzes the conversion of 4-hydroxy-tetrahydrodipicolinate (HTPA) to tetrahydrodipicolinate. This is 4-hydroxy-tetrahydrodipicolinate reductase from Staphylococcus aureus (strain MSSA476).